Reading from the N-terminus, the 123-residue chain is Protein Rev (123 aa).

Phosphoserine; by host CK2 is present on serine 5. The homomultimerization stretch occupies residues 18–26; that stretch reads IIKLLYQSS. Residues 25–50 are disordered; that stretch reads SSPCPNPRGSRQARKNRRRRWRARQR. The Nuclear localization signal and RNA-binding (RRE) motif lies at 34-50; sequence SRQARKNRRRRWRARQR. Positions 35–49 are enriched in basic residues; sequence RQARKNRRRRWRARQ. Positions 73 to 84 match the Nuclear export signal and binding to XPO1 motif; sequence LQLPPIERLRLD. The segment at 86 to 123 is disordered; that stretch reads SESCGTSGTQQPQGTETGVGGPQISVESSAVLGSGTKN. The span at 88–101 shows a compositional bias: polar residues; it reads SCGTSGTQQPQGTE. The residue at position 92 (serine 92) is a Phosphoserine; by host.

This sequence belongs to the HIV-1 REV protein family. Homomultimer; when bound to the RRE. Multimeric assembly is essential for activity and may involve XPO1. Binds to human KPNB1, XPO1, TNPO1, RANBP5 and IPO7. Interacts with the viral Integrase. Interacts with human KHDRBS1. Interacts with human NAP1; this interaction decreases Rev multimerization and stimulates its activity. Interacts with human DEAD-box helicases DDX3 and DDX24; these interactions may serve for viral RNA export to the cytoplasm and packaging, respectively. Interacts with human PSIP1; this interaction may inhibit HIV-1 DNA integration by promoting dissociation of the Integrase-LEDGF/p75 complex. Asymmetrically arginine dimethylated at one site by host PRMT6. Methylation impairs the RNA-binding activity and export of viral RNA from the nucleus to the cytoplasm. In terms of processing, phosphorylated by protein kinase CK2. Presence of, and maybe binding to the N-terminus of the regulatory beta subunit of CK2 is necessary for CK2-mediated Rev's phosphorylation.

Its subcellular location is the host nucleus. The protein resides in the host nucleolus. It is found in the host cytoplasm. Functionally, escorts unspliced or incompletely spliced viral pre-mRNAs (late transcripts) out of the nucleus of infected cells. These pre-mRNAs carry a recognition sequence called Rev responsive element (RRE) located in the env gene, that is not present in fully spliced viral mRNAs (early transcripts). This function is essential since most viral proteins are translated from unspliced or partially spliced pre-mRNAs which cannot exit the nucleus by the pathway used by fully processed cellular mRNAs. Rev itself is translated from a fully spliced mRNA that readily exits the nucleus. Rev's nuclear localization signal (NLS) binds directly to KPNB1/Importin beta-1 without previous binding to KPNA1/Importin alpha-1. KPNB1 binds to the GDP bound form of RAN (Ran-GDP) and targets Rev to the nucleus. In the nucleus, the conversion from Ran-GDP to Ran-GTP dissociates Rev from KPNB1 and allows Rev's binding to the RRE in viral pre-mRNAs. Rev multimerization on the RRE via cooperative assembly exposes its nuclear export signal (NES) to the surface. Rev can then form a complex with XPO1/CRM1 and Ran-GTP, leading to nuclear export of the complex. Conversion from Ran-GTP to Ran-GDP mediates dissociation of the Rev/RRE/XPO1/RAN complex, so that Rev can return to the nucleus for a subsequent round of export. Beside KPNB1, also seems to interact with TNPO1/Transportin-1, RANBP5/IPO5 and IPO7/RANBP7 for nuclear import. The nucleoporin-like HRB/RIP is an essential cofactor that probably indirectly interacts with Rev to release HIV RNAs from the perinuclear region to the cytoplasm. This is Protein Rev from Human immunodeficiency virus type 1 group M subtype A (isolate U455) (HIV-1).